The primary structure comprises 37 residues: Large ribosomal subunit protein bL36 (37 aa).

It belongs to the bacterial ribosomal protein bL36 family.

The chain is Large ribosomal subunit protein bL36 from Clostridium perfringens (strain ATCC 13124 / DSM 756 / JCM 1290 / NCIMB 6125 / NCTC 8237 / Type A).